We begin with the raw amino-acid sequence, 513 residues long: Ferulic acid decarboxylase 1 (513 aa).

3 residues coordinate Mn(2+): N174, H197, and E240. Residues 174-179 (NWSIAR), 196-197 (QH), and E240 contribute to the prenylated FMN site. The active-site Proton donor is the E289. K405 provides a ligand contact to prenylated FMN.

This sequence belongs to the UbiD family. UbiD-like/FDC subfamily. Homodimer. May form higher order oligomers. Mn(2+) is required as a cofactor. Requires prenylated FMN as cofactor.

The protein localises to the cytoplasm. It catalyses the reaction (E)-4-coumarate + H(+) = 4-vinylphenol + CO2. It carries out the reaction (E)-cinnamate + H(+) = styrene + CO2. The catalysed reaction is (E)-ferulate + H(+) = 2-methoxy-4-vinylphenol + CO2. Its function is as follows. Catalyzes the reversible decarboxylation of aromatic carboxylic acids like ferulic acid, p-coumaric acid or cinnamic acid, producing the corresponding vinyl derivatives 4-vinylphenol, 4-vinylguaiacol, and styrene, respectively, which play the role of aroma metabolites. In Candida dubliniensis (strain CD36 / ATCC MYA-646 / CBS 7987 / NCPF 3949 / NRRL Y-17841) (Yeast), this protein is Ferulic acid decarboxylase 1.